A 685-amino-acid polypeptide reads, in one-letter code: Iron(3+)-hydroxamate import system permease protein FhuB (685 aa).

Transmembrane regions (helical) follow at residues 35–55, 87–107, 120–140, 143–163, 172–192, 222–242, 265–285, 302–322, 328–348, 373–393, 416–436, 456–476, 479–499, 504–524, 553–573, 592–612, 632–652, and 660–680; these read ALLL…NFSV, LAIS…FQQV, VATG…PGAL, QFAA…VAWG, ILAG…LVIF, QLLG…LMGL, AIVL…IGLF, LMLA…IILW, MEVS…LWLL, LAFA…ALSF, WPRI…GCII, AAFG…GWLL, GSLG…RGGF, MLLA…MLQA, AIVM…LTIL, IALL…IGPL, MPHM…ADWC, and YQIP…IYLL.

The protein belongs to the binding-protein-dependent transport system permease family. FecCD subfamily. As to quaternary structure, the complex is composed of two ATP-binding proteins (FhuC), a transmembrane protein (FhuB) and a solute-binding protein (FhuD).

It localises to the cell inner membrane. Its function is as follows. Part of the ABC transporter complex FhuCDB involved in iron(3+)-hydroxamate import. Responsible for the translocation of the substrate across the membrane. Involved in ferrioxamine-mediated iron(III) utilization. The chain is Iron(3+)-hydroxamate import system permease protein FhuB (fhuB) from Salmonella typhimurium (strain LT2 / SGSC1412 / ATCC 700720).